The chain runs to 221 residues: Stromal cell-derived factor 2-like protein 1 (221 aa).

Residues 1–28 (MWGASRGRVAGPTLLGLLLALSVRSGGA) form the signal peptide. MIR domains lie at 33–87 (AGLV…IRGG), 95–150 (GLPV…VRCS), and 151–205 (GQHW…AMEG). Residue serine 215 is modified to Phosphoserine. The short motif at 218-221 (HDEL) is the Prevents secretion from ER element.

In terms of tissue distribution, ubiquitously expressed with high expression in the testis, ovary, uterus, and low expression in heart and skeletal muscle.

The protein resides in the endoplasmic reticulum lumen. The chain is Stromal cell-derived factor 2-like protein 1 (Sdf2l1) from Mus musculus (Mouse).